The chain runs to 394 residues: GTPase Obg (394 aa).

In terms of domain architecture, Obg spans 5–163 (SNFVDYVKIY…RMVIMQLKML (159 aa)). The disordered stretch occupies residues 26-45 (HFRREKYIPKGGPDGGDGGR). The OBG-type G domain occupies 164-330 (ADVGLVGFPN…LKDTLWKELS (167 aa)). GTP contacts are provided by residues 170–177 (GFPNAGKS), 195–199 (FTTLE), 217–220 (DIPG), 284–287 (TKCD), and 311–313 (SAV). The Mg(2+) site is built by Ser-177 and Thr-197.

The protein belongs to the TRAFAC class OBG-HflX-like GTPase superfamily. OBG GTPase family. In terms of assembly, monomer. The cofactor is Mg(2+).

The protein localises to the cytoplasm. An essential GTPase which binds GTP, GDP and possibly (p)ppGpp with moderate affinity, with high nucleotide exchange rates and a fairly low GTP hydrolysis rate. Plays a role in control of the cell cycle, stress response, ribosome biogenesis and in those bacteria that undergo differentiation, in morphogenesis control. The polypeptide is GTPase Obg (Porphyromonas gingivalis (strain ATCC 33277 / DSM 20709 / CIP 103683 / JCM 12257 / NCTC 11834 / 2561)).